A 252-amino-acid polypeptide reads, in one-letter code: 2-succinyl-6-hydroxy-2,4-cyclohexadiene-1-carboxylate synthase (252 aa).

This sequence belongs to the AB hydrolase superfamily. MenH family. As to quaternary structure, monomer.

It catalyses the reaction 5-enolpyruvoyl-6-hydroxy-2-succinyl-cyclohex-3-ene-1-carboxylate = (1R,6R)-6-hydroxy-2-succinyl-cyclohexa-2,4-diene-1-carboxylate + pyruvate. The protein operates within quinol/quinone metabolism; 1,4-dihydroxy-2-naphthoate biosynthesis; 1,4-dihydroxy-2-naphthoate from chorismate: step 3/7. It functions in the pathway quinol/quinone metabolism; menaquinone biosynthesis. Functionally, catalyzes a proton abstraction reaction that results in 2,5-elimination of pyruvate from 2-succinyl-5-enolpyruvyl-6-hydroxy-3-cyclohexene-1-carboxylate (SEPHCHC) and the formation of 2-succinyl-6-hydroxy-2,4-cyclohexadiene-1-carboxylate (SHCHC). The sequence is that of 2-succinyl-6-hydroxy-2,4-cyclohexadiene-1-carboxylate synthase from Salmonella paratyphi B (strain ATCC BAA-1250 / SPB7).